The following is a 430-amino-acid chain: Enolase (430 aa).

Gln167 contacts (2R)-2-phosphoglycerate. Residue Glu209 is the Proton donor of the active site. Positions 245, 286, and 313 each coordinate Mg(2+). Positions 338, 367, 368, and 389 each coordinate (2R)-2-phosphoglycerate. Lys338 functions as the Proton acceptor in the catalytic mechanism.

This sequence belongs to the enolase family. Mg(2+) is required as a cofactor.

Its subcellular location is the cytoplasm. It is found in the secreted. The protein localises to the cell surface. The enzyme catalyses (2R)-2-phosphoglycerate = phosphoenolpyruvate + H2O. The protein operates within carbohydrate degradation; glycolysis; pyruvate from D-glyceraldehyde 3-phosphate: step 4/5. In terms of biological role, catalyzes the reversible conversion of 2-phosphoglycerate (2-PG) into phosphoenolpyruvate (PEP). It is essential for the degradation of carbohydrates via glycolysis. In Synechococcus sp. (strain CC9902), this protein is Enolase.